The chain runs to 208 residues: MKLQVLDANGTSVKEISVNDAIWGIEPHQQAMFDAVIAQQASMRQGTHKTKTKTEVSGGGRKPWRQKGTGRARQGSIRAPQWKGGGIVFGPTPEKKYLKHVNKKVRKLAIKSAFSLKVQDKNIMIIDQFGIDKPSTKAMVKVLNNLKVNGEKLLIITTEGDEVNFKSSRNIEKVNIITSAGINIYDLLNANKLLVTEQAIKAIEEVYS.

The disordered stretch occupies residues 42 to 77 (SMRQGTHKTKTKTEVSGGGRKPWRQKGTGRARQGSI).

This sequence belongs to the universal ribosomal protein uL4 family. In terms of assembly, part of the 50S ribosomal subunit.

One of the primary rRNA binding proteins, this protein initially binds near the 5'-end of the 23S rRNA. It is important during the early stages of 50S assembly. It makes multiple contacts with different domains of the 23S rRNA in the assembled 50S subunit and ribosome. Functionally, forms part of the polypeptide exit tunnel. The chain is Large ribosomal subunit protein uL4 from Spiroplasma kunkelii.